The primary structure comprises 215 residues: UPF0502 protein PSEEN2299 (215 aa).

Belongs to the UPF0502 family.

This chain is UPF0502 protein PSEEN2299, found in Pseudomonas entomophila (strain L48).